We begin with the raw amino-acid sequence, 164 residues long: V-type proton ATPase subunit c' (164 aa).

At 1–16 (MDMVASDNVYAPLYAP) the chain is on the lumenal side. The chain crosses the membrane as a helical span at residues 17–37 (FFGFAGCALAMILSCLGAAIG). At 38 to 59 (TAKSGIGIAGIGTFKPELIMKS) the chain is on the cytoplasmic side. A helical membrane pass occupies residues 60-80 (LIPVVMSGILAIYGLVVAVLI). The Lumenal portion of the chain corresponds to 81-98 (AGNLSPTEEYTLFNGFMH). A helical transmembrane segment spans residues 99 to 119 (LSCGLCVGFACLSSGYAIGIV). Over 120–136 (GDVGVRKYMHQPRLFVG) the chain is Cytoplasmic. Residues 137 to 157 (IVLILIFSEVLGLYGMIIALI) form a helical membrane-spanning segment. Residues 158 to 164 (LNTKGSE) lie on the Lumenal side of the membrane.

It belongs to the V-ATPase proteolipid subunit family. As to quaternary structure, V-ATPase is a heteromultimeric enzyme composed of a peripheral catalytic V1 complex (components A to H) attached to an integral membrane V0 proton pore complex (components: a, c, c', c'', d, e, f and VOA1). The decameric c-ring forms the proton-conducting pore, and is composed of eight proteolipid subunits c, one subunit c' and one subunit c''.

The protein resides in the vacuole membrane. Its function is as follows. Proton-conducting pore forming subunit of the V0 complex of vacuolar(H+)-ATPase (V-ATPase), a multisubunit enzyme composed of a peripheral complex (V1) that hydrolyzes ATP and a membrane integral complex (V0) that translocates protons. V-ATPase is responsible for acidifying and maintaining the pH of intracellular compartments. The sequence is that of V-type proton ATPase subunit c' (VMA11) from Candida glabrata (strain ATCC 2001 / BCRC 20586 / JCM 3761 / NBRC 0622 / NRRL Y-65 / CBS 138) (Yeast).